The following is a 96-amino-acid chain: Large ribosomal subunit protein uL23 (96 aa).

This sequence belongs to the universal ribosomal protein uL23 family. As to quaternary structure, part of the 50S ribosomal subunit. Contacts protein L29, and trigger factor when it is bound to the ribosome.

One of the early assembly proteins it binds 23S rRNA. One of the proteins that surrounds the polypeptide exit tunnel on the outside of the ribosome. Forms the main docking site for trigger factor binding to the ribosome. This Onion yellows phytoplasma (strain OY-M) protein is Large ribosomal subunit protein uL23.